Here is a 340-residue protein sequence, read N- to C-terminus: Phenylalanine--tRNA ligase alpha subunit (340 aa).

Glu255 provides a ligand contact to Mg(2+).

It belongs to the class-II aminoacyl-tRNA synthetase family. Phe-tRNA synthetase alpha subunit type 1 subfamily. In terms of assembly, tetramer of two alpha and two beta subunits. Mg(2+) is required as a cofactor.

The protein localises to the cytoplasm. It catalyses the reaction tRNA(Phe) + L-phenylalanine + ATP = L-phenylalanyl-tRNA(Phe) + AMP + diphosphate + H(+). This chain is Phenylalanine--tRNA ligase alpha subunit, found in Desulforamulus reducens (strain ATCC BAA-1160 / DSM 100696 / MI-1) (Desulfotomaculum reducens).